A 324-amino-acid chain; its full sequence is Phospho-N-acetylmuramoyl-pentapeptide-transferase (324 aa).

A run of 10 helical transmembrane segments spans residues 9 to 29 (TFAV…PFLV), 54 to 74 (MGAV…SFIG), 77 to 97 (VSAA…LGFL), 117 to 137 (FLGQ…SDFA), 147 to 167 (IEVD…VGFS), 176 to 196 (LDGL…VIAF), 201 to 221 (MDVA…LLFN), 227 to 247 (IFMG…VSIL), 253 to 273 (LLLL…LQVF), and 304 to 324 (VLTF…VVIF).

The protein belongs to the glycosyltransferase 4 family. MraY subfamily. Mg(2+) serves as cofactor.

The protein resides in the cell membrane. The catalysed reaction is UDP-N-acetyl-alpha-D-muramoyl-L-alanyl-gamma-D-glutamyl-meso-2,6-diaminopimeloyl-D-alanyl-D-alanine + di-trans,octa-cis-undecaprenyl phosphate = di-trans,octa-cis-undecaprenyl diphospho-N-acetyl-alpha-D-muramoyl-L-alanyl-D-glutamyl-meso-2,6-diaminopimeloyl-D-alanyl-D-alanine + UMP. Its pathway is cell wall biogenesis; peptidoglycan biosynthesis. Its function is as follows. Catalyzes the initial step of the lipid cycle reactions in the biosynthesis of the cell wall peptidoglycan: transfers peptidoglycan precursor phospho-MurNAc-pentapeptide from UDP-MurNAc-pentapeptide onto the lipid carrier undecaprenyl phosphate, yielding undecaprenyl-pyrophosphoryl-MurNAc-pentapeptide, known as lipid I. The polypeptide is Phospho-N-acetylmuramoyl-pentapeptide-transferase (Listeria welshimeri serovar 6b (strain ATCC 35897 / DSM 20650 / CCUG 15529 / CIP 8149 / NCTC 11857 / SLCC 5334 / V8)).